The sequence spans 943 residues: Calcium-activated chloride channel regulator 2 (943 aa).

The first 31 residues, 1–31 (MTQRSIAGPICNLKFVTLLVALSSELPFLGA), serve as a signal peptide directing secretion. The Extracellular portion of the chain corresponds to 32–901 (GVQLQDNGYN…SDPVPARDYL (870 aa)). The tract at residues 54-205 (NQNLISNIKE…CSSDITGIFV (152 aa)) is metalloprotease domain. 2 N-linked (GlcNAc...) asparagine glycosylation sites follow: asparagine 74 and asparagine 150. Histidine 164 contacts Zn(2+). The active site involves glutamate 165. Residues histidine 168 and aspartate 175 each contribute to the Zn(2+) site. N-linked (GlcNAc...) asparagine glycosylation is present at asparagine 231. One can recognise a VWFA domain in the interval 311–483 (VVCLVLDVSS…NSMIDAFSRI (173 aa)). 2 N-linked (GlcNAc...) asparagine glycosylation sites follow: asparagine 522 and asparagine 822. Residues 902 to 922 (ILKGVLTAMGLIGIICLIIVV) traverse the membrane as a helical segment. The Cytoplasmic segment spans residues 923 to 943 (THHTLSRKKRADKKENGTKLL).

Belongs to the CLCR family. In terms of processing, the 141 kDa mature form is autoproteolytically cleaved by the metalloprotease domain, producing a 109 kDa form and a 35 kDa form. The cleavage is necessary for calcium-activated chloride channel (CaCC) activation activity. N-glycosylated. Expressed in cornea, skin, vagina, esophagus, and larynx (at protein level). Expressed in trachea and mammary gland. Weakly expressed in testis and kidney. Highly expressed in corneal epithelium, colon and trachea. Moderately expressed in brain, urogenital organs, bladder, uterus and prostate. Highly expressed in tissues containing stratified epithelium including cornea, esophagus, larynx, skin and vagina than those tissues which contain only epithelial monolayers. Expressed in normal breast epithelium but not in breast cancer. Highly expressed during epithelial stratification. Expressed in endothelial cells of lung. Expressed selectively in endothelia of small pulmonary arteries, arterioles, and subpleural and interlobular venules.

Its subcellular location is the cell membrane. The protein localises to the basal cell membrane. It localises to the cell junction. It is found in the secreted. Plays a role in modulating chloride current across the plasma membrane in a calcium-dependent manner, and cell adhesion. Involved in basal cell adhesion and/or stratification of squamous epithelia. May act as a tumor suppressor in breast and colorectal cancer. Plays a key role for cell adhesion in the beginning stages of lung metastasis via the binding to ITGB4. The polypeptide is Calcium-activated chloride channel regulator 2 (CLCA2) (Homo sapiens (Human)).